A 741-amino-acid chain; its full sequence is NUT family member 2G (741 aa).

Disordered stretches follow at residues 172 to 200 (PGNA…PDDS), 293 to 375 (IQKS…PEEI), 391 to 424 (LGSH…SDPG), 496 to 624 (RAAP…LPGM), and 638 to 741 (RLSQ…HCSQ). Residues 304-321 (SLPPPAPPRLEPRGPPAP) are compositionally biased toward pro residues. Over residues 402–412 (EGQREKGKVEQ) the composition is skewed to basic and acidic residues. The segment covering 528–545 (QRVSVETSPPQTAAQDPQ) has biased composition (polar residues). Low complexity predominate over residues 639–650 (LSQSPVPSSGLL). Basic residues predominate over residues 731 to 741 (SRRKKKRHCSQ).

The protein belongs to the NUT family.

In Homo sapiens (Human), this protein is NUT family member 2G (NUTM2G).